The primary structure comprises 598 residues: Membrane protein insertase YidC (598 aa).

The chain crosses the membrane as a helical span at residues 7–27 (NYFIAIALSVLIVLGWQFLYM). The tract at residues 37-71 (AQEAQKAQQQTEQVQQPAAGGATPAPASGTAPSGQ) is disordered. Over residues 40–71 (AQKAQQQTEQVQQPAAGGATPAPASGTAPSGQ) the composition is skewed to low complexity. Transmembrane regions (helical) follow at residues 373 to 393 (FFGN…ALFF), 447 to 467 (WPVA…YITI), 492 to 512 (LFGL…WPLI), and 538 to 558 (WMPL…VIYW).

The protein belongs to the OXA1/ALB3/YidC family. Type 1 subfamily. In terms of assembly, interacts with the Sec translocase complex via SecD. Specifically interacts with transmembrane segments of nascent integral membrane proteins during membrane integration.

It is found in the cell inner membrane. Required for the insertion and/or proper folding and/or complex formation of integral membrane proteins into the membrane. Involved in integration of membrane proteins that insert both dependently and independently of the Sec translocase complex, as well as at least some lipoproteins. Aids folding of multispanning membrane proteins. This is Membrane protein insertase YidC from Rhizobium etli (strain CIAT 652).